The following is a 205-amino-acid chain: MIIKVCGMREPENIRAIEQAGADWMGFIFFPQSARYVSHRPEYLPEQCHRIGVFVNESSENILLKAQEFGLHHIQLHGRETPEQCRKLKAAGLGVIKVFSIAQESDLQSAGCYEGVCDYFLFDTACSGYGGSGKTFNWNILQAYRGKTPFLLSGGLRPGSLSLLLQFKHEQWAGIDLNSGFETAPALKDDAAVHTFINQLKQKIQ.

The protein belongs to the TrpF family.

The enzyme catalyses N-(5-phospho-beta-D-ribosyl)anthranilate = 1-(2-carboxyphenylamino)-1-deoxy-D-ribulose 5-phosphate. It participates in amino-acid biosynthesis; L-tryptophan biosynthesis; L-tryptophan from chorismate: step 3/5. The chain is N-(5'-phosphoribosyl)anthranilate isomerase from Phocaeicola vulgatus (strain ATCC 8482 / DSM 1447 / JCM 5826 / CCUG 4940 / NBRC 14291 / NCTC 11154) (Bacteroides vulgatus).